Reading from the N-terminus, the 103-residue chain is Trp operon repressor homolog (103 aa).

A DNA-binding region spans residues Gln-62–His-85.

The protein belongs to the TrpR family. In terms of assembly, homodimer.

The protein resides in the cytoplasm. Functionally, this protein is an aporepressor. When complexed with L-tryptophan it binds the operator region of the trp operon and prevents the initiation of transcription. This is Trp operon repressor homolog from Photobacterium profundum (strain SS9).